Reading from the N-terminus, the 519-residue chain is Protein nucleotidyltransferase YdiU (519 aa).

Gly100, Gly102, Arg103, Lys123, Asp135, Gly136, Arg193, and Arg200 together coordinate ATP. Asp270 functions as the Proton acceptor in the catalytic mechanism. The Mg(2+) site is built by Asn271 and Asp280. Asp280 provides a ligand contact to ATP.

It belongs to the SELO family. It depends on Mg(2+) as a cofactor. The cofactor is Mn(2+).

It catalyses the reaction L-seryl-[protein] + ATP = 3-O-(5'-adenylyl)-L-seryl-[protein] + diphosphate. It carries out the reaction L-threonyl-[protein] + ATP = 3-O-(5'-adenylyl)-L-threonyl-[protein] + diphosphate. The enzyme catalyses L-tyrosyl-[protein] + ATP = O-(5'-adenylyl)-L-tyrosyl-[protein] + diphosphate. The catalysed reaction is L-histidyl-[protein] + UTP = N(tele)-(5'-uridylyl)-L-histidyl-[protein] + diphosphate. It catalyses the reaction L-seryl-[protein] + UTP = O-(5'-uridylyl)-L-seryl-[protein] + diphosphate. It carries out the reaction L-tyrosyl-[protein] + UTP = O-(5'-uridylyl)-L-tyrosyl-[protein] + diphosphate. Functionally, nucleotidyltransferase involved in the post-translational modification of proteins. It can catalyze the addition of adenosine monophosphate (AMP) or uridine monophosphate (UMP) to a protein, resulting in modifications known as AMPylation and UMPylation. The sequence is that of Protein nucleotidyltransferase YdiU from Xylella fastidiosa (strain Temecula1 / ATCC 700964).